The chain runs to 302 residues: 4-hydroxy-tetrahydrodipicolinate synthase (302 aa).

T56 provides a ligand contact to pyruvate. Y145 serves as the catalytic Proton donor/acceptor. K173 serves as the catalytic Schiff-base intermediate with substrate. V215 lines the pyruvate pocket.

Belongs to the DapA family. Homotetramer; dimer of dimers.

Its subcellular location is the cytoplasm. The catalysed reaction is L-aspartate 4-semialdehyde + pyruvate = (2S,4S)-4-hydroxy-2,3,4,5-tetrahydrodipicolinate + H2O + H(+). Its pathway is amino-acid biosynthesis; L-lysine biosynthesis via DAP pathway; (S)-tetrahydrodipicolinate from L-aspartate: step 3/4. Catalyzes the condensation of (S)-aspartate-beta-semialdehyde [(S)-ASA] and pyruvate to 4-hydroxy-tetrahydrodipicolinate (HTPA). This Prochlorococcus marinus (strain MIT 9515) protein is 4-hydroxy-tetrahydrodipicolinate synthase.